The chain runs to 348 residues: Phenylalanine--tRNA ligase alpha subunit (348 aa).

Glu-262 provides a ligand contact to Mg(2+).

The protein belongs to the class-II aminoacyl-tRNA synthetase family. Phe-tRNA synthetase alpha subunit type 1 subfamily. As to quaternary structure, tetramer of two alpha and two beta subunits. Mg(2+) serves as cofactor.

The protein resides in the cytoplasm. It catalyses the reaction tRNA(Phe) + L-phenylalanine + ATP = L-phenylalanyl-tRNA(Phe) + AMP + diphosphate + H(+). The chain is Phenylalanine--tRNA ligase alpha subunit from Streptococcus pneumoniae (strain JJA).